Here is a 485-residue protein sequence, read N- to C-terminus: Glutamyl-tRNA(Gln) amidotransferase subunit A (485 aa).

Residues K74 and S149 each act as charge relay system in the active site. S173 functions as the Acyl-ester intermediate in the catalytic mechanism.

The protein belongs to the amidase family. GatA subfamily. In terms of assembly, heterotrimer of A, B and C subunits.

It catalyses the reaction L-glutamyl-tRNA(Gln) + L-glutamine + ATP + H2O = L-glutaminyl-tRNA(Gln) + L-glutamate + ADP + phosphate + H(+). Functionally, allows the formation of correctly charged Gln-tRNA(Gln) through the transamidation of misacylated Glu-tRNA(Gln) in organisms which lack glutaminyl-tRNA synthetase. The reaction takes place in the presence of glutamine and ATP through an activated gamma-phospho-Glu-tRNA(Gln). The protein is Glutamyl-tRNA(Gln) amidotransferase subunit A of Janthinobacterium sp. (strain Marseille) (Minibacterium massiliensis).